Reading from the N-terminus, the 448-residue chain is Adenylosuccinate synthetase (448 aa).

Residues 22–28 (GDEGKGK) and 50–52 (GHT) each bind GTP. Residue aspartate 23 is the Proton acceptor of the active site. Mg(2+) is bound by residues aspartate 23 and glycine 50. IMP is bound by residues 23–26 (DEGK), 48–51 (NAGH), threonine 139, arginine 153, glutamine 234, threonine 249, and arginine 321. The active-site Proton donor is the histidine 51. A substrate-binding site is contributed by 317–323 (SVTGRPR). Residues arginine 323, 349-351 (KLD), and 431-433 (STG) contribute to the GTP site.

The protein belongs to the adenylosuccinate synthetase family. As to quaternary structure, homodimer. Mg(2+) serves as cofactor.

It is found in the cytoplasm. It catalyses the reaction IMP + L-aspartate + GTP = N(6)-(1,2-dicarboxyethyl)-AMP + GDP + phosphate + 2 H(+). It participates in purine metabolism; AMP biosynthesis via de novo pathway; AMP from IMP: step 1/2. Its function is as follows. Plays an important role in the de novo pathway of purine nucleotide biosynthesis. Catalyzes the first committed step in the biosynthesis of AMP from IMP. The protein is Adenylosuccinate synthetase of Burkholderia thailandensis (strain ATCC 700388 / DSM 13276 / CCUG 48851 / CIP 106301 / E264).